The sequence spans 136 residues: NADPH-dependent 7-cyano-7-deazaguanine reductase (136 aa).

Residue Cys-50 is the Thioimide intermediate of the active site. The active-site Proton donor is the Asp-57. Substrate-binding positions include 72 to 74 and 91 to 92; these read YEL and HE.

The protein belongs to the GTP cyclohydrolase I family. QueF type 1 subfamily.

Its subcellular location is the cytoplasm. The catalysed reaction is 7-aminomethyl-7-carbaguanine + 2 NADP(+) = 7-cyano-7-deazaguanine + 2 NADPH + 3 H(+). It functions in the pathway tRNA modification; tRNA-queuosine biosynthesis. Catalyzes the NADPH-dependent reduction of 7-cyano-7-deazaguanine (preQ0) to 7-aminomethyl-7-deazaguanine (preQ1). This is NADPH-dependent 7-cyano-7-deazaguanine reductase from Prochlorococcus marinus (strain MIT 9312).